The sequence spans 1352 residues: Alpha-protein kinase 1 (1352 aa).

In terms of domain architecture, Arf-GAP spans 7 to 127 (DPNYGLLRSL…RWTSSLSTSD (121 aa)). The C4-type zinc finger occupies 25–48 (CAECNSANVPYVCIKLGVFICPTC). Disordered stretches follow at residues 123 to 164 (LSTS…NNNN), 219 to 380 (TQSQ…PQHH), 424 to 445 (QQQQ…NSEP), 457 to 484 (HNHH…GNNS), 503 to 560 (FVEE…GGVS), and 619 to 658 (IINN…TNQN). The span at 237-246 (GFSPFNSPRS) shows a compositional bias: polar residues. 2 stretches are compositionally biased toward low complexity: residues 268-287 (NNSN…NNGN) and 298-318 (NNNN…NNNN). 2 stretches are compositionally biased toward polar residues: residues 329 to 352 (KTFS…SGNS) and 359 to 379 (HPTQ…SPQH). A coiled-coil region spans residues 393–429 (TTQQQLQQQQLQLQQQLQQQLQQQQQQQQQQQQQQQS). Basic residues-rich tracts occupy residues 458 to 470 (NHHH…HHKQ) and 510 to 523 (HQHP…RHHS). The segment covering 619 to 636 (IINNQNNQNNNNNNNTNN) has biased composition (low complexity). Positions 689–781 (YIQQQQQQQQ…QQQQQQHINL (93 aa)) form a coiled coil. Disordered regions lie at residues 786 to 863 (PLQS…TDED) and 901 to 979 (TSPI…PDAR). The segment covering 799–812 (PQHSSSQYMNQQGY) has biased composition (polar residues). The span at 821–859 (QPQSPQQIQPQPLQQQIFQQVQQQQPQIPQQSPQPLQSS) shows a compositional bias: low complexity. Residues 906 to 915 (QQPPQPPQPV) show a composition bias toward pro residues. Low complexity predominate over residues 931-965 (QQQNGPTVPQQQQQQQQQQQQQQQQQQQQQQQQQP). The Alpha-type protein kinase domain maps to 990-1194 (RFDAKLGKWV…ICHYLGLSSV (205 aa)). Residue 1164–1169 (GKGNLG) coordinates ATP. 2 disordered regions span residues 1198-1234 (PAND…SFNF) and 1279-1352 (QQQQ…KLVS). Residues 1241–1320 (HVLEQLNQQQ…QQQQQQQQNG (80 aa)) adopt a coiled-coil conformation. Low complexity predominate over residues 1279–1319 (QQQQQQQQQQQQQQQQNQQQNQQQNQQQQQQQQQQQQQQQN). The span at 1321–1332 (HPPPQTPLPPTP) shows a compositional bias: pro residues. A compositionally biased stretch (basic and acidic residues) spans 1334–1352 (QKDKPKIEVFGDILRKLVS).

It belongs to the protein kinase superfamily. Alpha-type protein kinase family. ALPK subfamily.

The protein is Alpha-protein kinase 1 (ak1) of Dictyostelium discoideum (Social amoeba).